Here is a 449-residue protein sequence, read N- to C-terminus: Allantoinase (449 aa).

Zn(2+) contacts are provided by histidine 59, histidine 61, lysine 146, histidine 182, histidine 238, and aspartate 311. N6-carboxylysine is present on lysine 146.

Belongs to the metallo-dependent hydrolases superfamily. Allantoinase family. In terms of assembly, homotetramer. The cofactor is Zn(2+). Carboxylation allows a single lysine to coordinate two zinc ions.

It carries out the reaction (S)-allantoin + H2O = allantoate + H(+). Its pathway is nitrogen metabolism; (S)-allantoin degradation; allantoate from (S)-allantoin: step 1/1. Catalyzes the conversion of allantoin (5-ureidohydantoin) to allantoic acid by hydrolytic cleavage of the five-member hydantoin ring. The polypeptide is Allantoinase (Deinococcus geothermalis (strain DSM 11300 / CIP 105573 / AG-3a)).